The sequence spans 1170 residues: Thrombospondin-1 (1170 aa).

Positions 1-18 (MGLAWGLGVLLLLHACGS) are cleaved as a signal peptide. The interval 47 to 95 (RLVKGPDPSSPAFRIEDANLIPPVPDKKFQDLVDAVRAEKGFLLLASLR) is heparin-binding. One can recognise a Laminin G-like domain in the interval 65-270 (NLIPPVPDKK…HKTKDLQAIC (206 aa)). The cysteines at positions 171 and 232 are disulfide-linked. 2 N-linked (GlcNAc...) asparagine glycosylation sites follow: asparagine 248 and asparagine 360. The 58-residue stretch at 316 to 373 (PLCYHNGVQYRTGDEWTVDSCTECRCQNSVTICKKVSCPIMPCSNATVPDGECCPRCW) folds into the VWFC domain. 3 consecutive TSP type-1 domains span residues 379–429 (DDGW…QECD), 435–490 (DGGW…DSCP), and 492–547 (NGGW…QDCP). Cystine bridges form between cysteine 391/cysteine 423, cysteine 395/cysteine 428, cysteine 406/cysteine 413, cysteine 447/cysteine 484, cysteine 451/cysteine 489, cysteine 462/cysteine 474, cysteine 504/cysteine 541, cysteine 508/cysteine 546, cysteine 519/cysteine 531, cysteine 551/cysteine 562, cysteine 556/cysteine 572, cysteine 575/cysteine 586, cysteine 592/cysteine 608, cysteine 599/cysteine 617, cysteine 620/cysteine 644, cysteine 650/cysteine 663, cysteine 657/cysteine 676, cysteine 678/cysteine 689, cysteine 705/cysteine 713, cysteine 718/cysteine 738, cysteine 754/cysteine 774, cysteine 777/cysteine 797, cysteine 813/cysteine 833, cysteine 836/cysteine 856, cysteine 874/cysteine 894, cysteine 910/cysteine 930, and cysteine 946/cysteine 1167. An EGF-like 1 domain is found at 547–587 (PIDGCLSNPCFAGVQCTSYPDGSWKCGACPPGYSGDGVECK). Serine 553 is a glycosylation site (O-linked (Xyl) serine). Residues 646–690 (PRNPCTDGTHDCNKNAKCNYLGHYSDPMYRCECKPGYAGNGIICG) form the EGF-like 2 domain. 8 TSP type-3 repeats span residues 691–726 (EDTD…NSGQ), 727–762 (EDYD…NPAQ), 763–785 (YDYD…NPDQ), 786–821 (ADTD…NVDQ), 822–844 (KDTD…NPDQ), 845–882 (LDSD…NANQ), 883–918 (ADHD…NPDQ), and 919–954 (KDSD…DISE). N-linked (GlcNAc...) asparagine glycosylation occurs at asparagine 708. The tract at residues 839 to 944 (EHNPDQLDSD…DQDKVPDIDD (106 aa)) is disordered. Basic and acidic residues-rich tracts occupy residues 840 to 854 (HNPD…RIGD), 883 to 894 (ADHDKDGKGDAC), and 917 to 941 (DQKD…KVPD). Positions 926-928 (RGD) match the Cell attachment site motif. The TSP C-terminal domain occupies 958–1170 (RRFQMIPLDP…SDLKYECRDS (213 aa)). Asparagine 1067 and asparagine 1085 each carry an N-linked (GlcNAc...) asparagine glycan.

This sequence belongs to the thrombospondin family. In terms of assembly, homotrimer; disulfide-linked. Can bind to fibrinogen, fibronectin, laminin, type V collagen and integrins alpha-V/beta-1, alpha-V/beta-3 and alpha-IIb/beta-3. Binds heparin. Interacts (via the C-terminal domain) with CD47. Interacts (via the TSP type I repeats) with CD36; the interaction conveys an antiangiogenic effect. Interacts (via the TSP type I repeats) with HRG; the interaction blocks the antiangiogenic effect of THBS1 with CD36. Interacts with ATF6 (via lumenal domain). Interacts with FN1; this interaction is enhanced by TNFAIP6, which may act as a bridging molecule between FN1 and THBS1. Interacts with SIRPA; the interaction stimulates phosphorylation of SIRPA. As to expression, odontoblasts.

The protein localises to the secreted. It is found in the cell surface. Its subcellular location is the extracellular space. It localises to the extracellular matrix. The protein resides in the endoplasmic reticulum. The protein localises to the sarcoplasmic reticulum. Adhesive glycoprotein that mediates cell-to-cell and cell-to-matrix interactions. Multifunctional, involved in inflammation, angiogenesis, wound healing, reactive oxygen species (ROS) signaling, nitrous oxide (NO) signaling, apoptosis, senescence, aging, cellular self-renewal, stemness, and cardiovascular and metabolic homeostasis. Negatively modulates dendritic cell activation and cytokine release, as part of an autocrine feedback loop, contributing to the resolution of inflammation and immune homeostasis. Ligand for receptor CD47. Modulates nitrous oxide (NO) signaling via CD47, hence playing a role as a pressor agent, supporting blood pressure. Plays a role in endothelial cell senescence, acting via CD47, by increasing the abundance and activation of NADPH oxidase NOX1, and so generating excess ROS. Inhibits stem cell self-renewal, acting via CD47 signaling, probably by regulation of the stem cell transcription factors POU5F1/OCT4, SOX2, MYC/c-Myc and KLF4. Negatively modulates wound healing, acting via CD47. Ligand for receptor CD36. Involved in inducing apoptosis in podocytes in response to elevated free fatty acids, acting via CD36. Plays a role in suppressing angiogenesis, acting, depending on context, via CD36 or CD47. Promotes cellular senescence in a TP53-CDKN1A-RB1 signaling-dependent manner. Ligand for immunoglobulin-like cell surface receptor SIRPA. Involved in ROS signaling in non-phagocytic cells, stimulating NADPH oxidase-derived ROS production, acting via interaction with SIRPA. Plays a role in metabolic dysfunction in diet-induced obesity, perhaps acting by exacerbating adipose inflammatory activity; its effects may be mediated, at least in part, through enhanced adipocyte proliferation. Plays a role in ER stress response, via its interaction with the activating transcription factor 6 alpha (ATF6) which produces adaptive ER stress response factors. May be involved in age-related conditions, including metabolic dysregulation, during normal aging. This is Thrombospondin-1 (THBS1) from Bos taurus (Bovine).